The chain runs to 621 residues: MEATGAEATLSQVTAVDGEDNLFQDKESRATAKERGEAAVFGLENIVTANGATSAADLAPPKDVVDEWPEPKQTHTFFFVRICSYEDPSLKAKLEQADKECQKKIQARSHIFEALRTKRSERSNIISELKPLAAENKQYNEVVSGKLKEIEPLQKSLGKFRSENNAMRAQGAGLCSSIEELDQLIKSLNDRISHESISLDEEKRLVKEIKQLNGTRSKVIENAAKRAKMQDTVVERGTIHDQVKQIGVGIDEVKRDRQAVRDKIKVLEDQIHAVDGEIAALQDDLTAATARKDKAFEALNELRKTRDLNNTSFHQYRTISNSVRDLSARGEVEAVQQLCQNEVEKFMAQWCSSKSFREDYEKRILVSLNSRQLSRDGRMRNPDEKPIVLETQVAPPAEQEPAPLKKPAKQAKEAPAPRADVTPKDEIRAKAPAKAAKAKQPLDIDDIPDVHDDEPPKEKTKPKVDEAKLKEMKRQEEIEKNKLALERKKKQAEKQAMKAAARAEKEAEKKLKEKEKKARKRSATAGGAESEEAAESDAKSDEAEAQEEEPAAPVTIKKNARHRSTVTKTKTPLPKAVLKRKKSQAFWSWGAPMAALAAALVALLGALVYYQYYYLPASTSN.

Positions 250 to 305 form a coiled coil; it reads IDEVKRDRQAVRDKIKVLEDQIHAVDGEIAALQDDLTAATARKDKAFEALNELRKT. The segment covering 374–387 has biased composition (basic and acidic residues); sequence SRDGRMRNPDEKPI. Residues 374–572 are disordered; it reads SRDGRMRNPD…RSTVTKTKTP (199 aa). Residues 430 to 441 show a composition bias toward low complexity; sequence KAPAKAAKAKQP. Residues 448-516 show a composition bias toward basic and acidic residues; the sequence is PDVHDDEPPK…AEKKLKEKEK (69 aa). Residues 466–524 adopt a coiled-coil conformation; that stretch reads EAKLKEMKRQEEIEKNKLALERKKKQAEKQAMKAAARAEKEAEKKLKEKEKKARKRSAT. A helical membrane pass occupies residues 589–609; the sequence is WGAPMAALAAALVALLGALVY.

The protein belongs to the plant proton pump-interactor protein family. As to quaternary structure, interacts with BRI1.

It localises to the cell membrane. Its function is as follows. May regulate plasma membrane ATPase activity. The polypeptide is Proton pump-interactor BIP131 (Oryza sativa subsp. japonica (Rice)).